The primary structure comprises 327 residues: Phenylalanine--tRNA ligase alpha subunit (327 aa).

Position 252 (Glu252) interacts with Mg(2+).

It belongs to the class-II aminoacyl-tRNA synthetase family. Phe-tRNA synthetase alpha subunit type 1 subfamily. As to quaternary structure, tetramer of two alpha and two beta subunits. Mg(2+) serves as cofactor.

It localises to the cytoplasm. The enzyme catalyses tRNA(Phe) + L-phenylalanine + ATP = L-phenylalanyl-tRNA(Phe) + AMP + diphosphate + H(+). The protein is Phenylalanine--tRNA ligase alpha subunit of Shigella sonnei (strain Ss046).